Consider the following 390-residue polypeptide: Tuftelin (390 aa).

Coiled coils occupy residues 88–126 (DKMIHEKNINQLKSEVQYIQEARNCLQKLREDISSKLDR) and 162–351 (DTHI…IEKQ). Serine 171 carries the phosphoserine modification.

Belongs to the tuftelin family. Interacts with TFIP11. Present in the extracellular enamel and is mainly associated with the crystal component.

It is found in the secreted. Its function is as follows. Involved in the structural organization of the epidermis. Involved in the mineralization and structural organization of enamel. This chain is Tuftelin (TUFT1), found in Bos taurus (Bovine).